We begin with the raw amino-acid sequence, 375 residues long: Platelet-derived growth factor receptor-like protein (375 aa).

The first 21 residues, 1–21 (MKVWLLLGLLLVHEALEDVTG), serve as a signal peptide directing secretion. Residues 22 to 64 (QHLPKNKRPKEPGENRIKPTNKKVKPKIPKIKDRDSADSTPKT) form a disordered region. The span at 40-50 (PTNKKVKPKIP) shows a compositional bias: basic residues. The Ig-like C2-type 1 domain occupies 62–159 (PKTQSIMMQV…GYICRKDETK (98 aa)). The cysteines at positions 96 and 143 are disulfide-linked. N-linked (GlcNAc...) asparagine glycans are attached at residues Asn132 and Asn219. In terms of domain architecture, Ig-like C2-type 2 spans 272–375 (PSTTILASSN…TTVATTVEFS (104 aa)). Cys293 and Cys357 are joined by a disulfide.

In terms of assembly, forms a complex composed of PDGFRL, TNK2 and GRB2.

It is found in the secreted. The chain is Platelet-derived growth factor receptor-like protein (PDGFRL) from Macaca fascicularis (Crab-eating macaque).